The primary structure comprises 187 residues: MIDAESPTTAFRTKPAPVDPSLQHEIEQFYYWEAKLLNDRRFQEWFDLLAEDIHYFMPIRTTRIMRETAQEYSGAREYAHFDDNAQMMRGRLRKITSDVSWSENPASRTRHVISNVMIVDGEKPGEYHVSSVFIVYRNRLERQLDIFAGERKDILRRTGSEAGFELAKRTILIDQSTILSNNLSFFF.

This sequence belongs to the bacterial ring-hydroxylating dioxygenase beta subunit family. In terms of assembly, heterohexamer consisting of three BphA1 subunits and three BphA2 subunits. The multicomponent biphenyl dioxygenase system is composed of a ferredoxin reductase (BphA4), a ferredoxin (BphA3), and a terminal oxygenase (BphA1A2).

It catalyses the reaction biphenyl + NADH + O2 + H(+) = (2R,3S)-3-phenylcyclohexa-3,5-diene-1,2-diol + NAD(+). It participates in xenobiotic degradation; biphenyl degradation; 2-hydroxy-2,4-pentadienoate and benzoate from biphenyl: step 1/4. Part of the oxygenase component of the biphenyl dioxygenase system that catalyzes the stereospecific dihydroxylation of the aromatic ring of biphenyl, yielding a dihydrodiol compound. Is likely involved in biphenyl degradation that allows growth of Rhodococcus sp. strain RHA1 on biphenyl as the sole source of carbon and energy. Can also use naphtalene and 4-chlorobiphenyl (4-CB) as substrates, as well as some polychlorinated biphenyls (PCB) such as 2,2'-dichlorobiphenyl, 2,3-dichlorobiphenyl and 2,5,2'-trichlorobiphenyl. Exhibits weak activity toward dibenzofuran and dibenzo-p-dioxin. Electrons are transferred from NADH to the [2Fe-2S] cluster in BphA1 via FAD of BphA4 and [2Fe-2S] cluster of BphA3. This is Biphenyl 2,3-dioxygenase subunit beta from Rhodococcus jostii (strain RHA1).